The following is a 328-amino-acid chain: Peroxidase 25 (328 aa).

Residues 1-26 (MGVYLGKYCYIMIIMLVLVLGKEVRS) form the signal peptide. 4 disulfides stabilise this stretch: cysteine 38–cysteine 114, cysteine 71–cysteine 76, cysteine 120–cysteine 324, and cysteine 198–cysteine 230. Histidine 69 serves as the catalytic Proton acceptor. 5 residues coordinate Ca(2+): aspartate 70, valine 73, glycine 75, aspartate 77, and serine 79. Proline 161 lines the substrate pocket. Histidine 191 serves as a coordination point for heme b. Residue threonine 192 participates in Ca(2+) binding. Asparagine 207 carries N-linked (GlcNAc...) asparagine glycosylation. The Ca(2+) site is built by aspartate 243, serine 246, and aspartate 251.

This sequence belongs to the peroxidase family. Classical plant (class III) peroxidase subfamily. Requires heme b as cofactor. Ca(2+) is required as a cofactor.

It localises to the secreted. It carries out the reaction 2 a phenolic donor + H2O2 = 2 a phenolic radical donor + 2 H2O. In terms of biological role, removal of H(2)O(2), oxidation of toxic reductants, biosynthesis and degradation of lignin, suberization, auxin catabolism, response to environmental stresses such as wounding, pathogen attack and oxidative stress. These functions might be dependent on each isozyme/isoform in each plant tissue. The protein is Peroxidase 25 (PER25) of Arabidopsis thaliana (Mouse-ear cress).